A 418-amino-acid polypeptide reads, in one-letter code: Gamma-glutamyl phosphate reductase (418 aa).

This sequence belongs to the gamma-glutamyl phosphate reductase family.

The protein localises to the cytoplasm. It catalyses the reaction L-glutamate 5-semialdehyde + phosphate + NADP(+) = L-glutamyl 5-phosphate + NADPH + H(+). The protein operates within amino-acid biosynthesis; L-proline biosynthesis; L-glutamate 5-semialdehyde from L-glutamate: step 2/2. Its function is as follows. Catalyzes the NADPH-dependent reduction of L-glutamate 5-phosphate into L-glutamate 5-semialdehyde and phosphate. The product spontaneously undergoes cyclization to form 1-pyrroline-5-carboxylate. In Desulforapulum autotrophicum (strain ATCC 43914 / DSM 3382 / VKM B-1955 / HRM2) (Desulfobacterium autotrophicum), this protein is Gamma-glutamyl phosphate reductase.